The sequence spans 241 residues: MSEEIANQNPDALVISKDPLHPANLIPELCASFYHLGWVTGTGGGISIRQGNIVYIAPSGVQKERIKPTDIFVLPYPQPPCDPHADRIFLRRPSNNLKESACTPLFWNSFELRDAGSCIHTHSQHAVMATLLWPGEVFKVSHLMIKGVRIGGTGKALSYLDTLVVPIIENTPFEEDLKDSMAEAMKKYPDAAGVLVRRHGVYVWGTDWEKAKTQTECLDYLFEVAVKMKLAGVPTLLNEDK.

Cys-102 is a binding site for substrate. 3 residues coordinate Zn(2+): His-120, His-122, and His-199.

This sequence belongs to the aldolase class II family. MtnB subfamily. Zn(2+) is required as a cofactor.

It is found in the cytoplasm. The enzyme catalyses 5-(methylsulfanyl)-D-ribulose 1-phosphate = 5-methylsulfanyl-2,3-dioxopentyl phosphate + H2O. Its pathway is amino-acid biosynthesis; L-methionine biosynthesis via salvage pathway; L-methionine from S-methyl-5-thio-alpha-D-ribose 1-phosphate: step 2/6. In terms of biological role, catalyzes the dehydration of methylthioribulose-1-phosphate (MTRu-1-P) into 2,3-diketo-5-methylthiopentyl-1-phosphate (DK-MTP-1-P). The sequence is that of Methylthioribulose-1-phosphate dehydratase from Coprinopsis cinerea (strain Okayama-7 / 130 / ATCC MYA-4618 / FGSC 9003) (Inky cap fungus).